Reading from the N-terminus, the 470-residue chain is Pre-mycofactocin glycosyltransferase (470 aa).

The helical transmembrane segment at 315–335 (LVISGGALMAWILMSIGTGLG) threads the bilayer.

This sequence belongs to the glycosyltransferase 2 family.

It localises to the cell membrane. Functionally, involved in the biosynthesis of the enzyme cofactor mycofactocin (MFT). Acts as a glycosyltransferase that catalyzes the oligoglycosylation of pre-mycofactocin (PMFT), adding up to nine beta-1,4-linked glucose residues. Is required for the in vivo ethanol assimilation in M.smegmatis. This is Pre-mycofactocin glycosyltransferase (mftF) from Mycobacterium tuberculosis (strain CDC 1551 / Oshkosh).